Reading from the N-terminus, the 109-residue chain is Ubiquitin-related modifier 1 homolog (109 aa).

Gly-109 is modified (1-thioglycine). Gly-109 participates in a covalent cross-link: Glycyl lysine isopeptide (Gly-Lys) (interchain with K-? in acceptor proteins).

This sequence belongs to the URM1 family. C-terminal thiocarboxylation occurs in 2 steps, it is first acyl-adenylated (-COAMP) via the hesA/moeB/thiF part of the MOCS3 homolog, then thiocarboxylated (-COSH) via the rhodanese domain of the MOCS3 homolog.

The protein resides in the cytoplasm. It functions in the pathway tRNA modification; 5-methoxycarbonylmethyl-2-thiouridine-tRNA biosynthesis. Functionally, acts as a sulfur carrier required for 2-thiolation of mcm(5)S(2)U at tRNA wobble positions of cytosolic tRNA(Lys), tRNA(Glu) and tRNA(Gln). Serves as sulfur donor in tRNA 2-thiolation reaction by being thiocarboxylated (-COSH) at its C-terminus by MOCS3. The sulfur is then transferred to tRNA to form 2-thiolation of mcm(5)S(2)U. Also acts as a ubiquitin-like protein (UBL) that is covalently conjugated via an isopeptide bond to lysine residues of target proteins. The thiocarboxylated form serves as substrate for conjugation and oxidative stress specifically induces the formation of UBL-protein conjugates. In Bombyx mori (Silk moth), this protein is Ubiquitin-related modifier 1 homolog.